Consider the following 110-residue polypeptide: Snake venom vascular endothelial growth factor toxin HF (110 aa).

Glutamine 1 carries the pyrrolidone carboxylic acid modification. Intrachain disulfides connect cysteine 14-cysteine 56, cysteine 45-cysteine 91, and cysteine 49-cysteine 93.

The protein belongs to the PDGF/VEGF growth factor family. Snake venom VEGF subfamily. As to quaternary structure, homodimer; disulfide-linked. Interacts with VEGF receptor-2 (KDR) with high affinity. As to expression, expressed by the venom gland.

It is found in the secreted. In terms of biological role, snake venom VEGFs that may contribute to venom dispersion and prey subjugation by inducing vascular permeability and hypotension. This protein induces an increase in capillary permeability after intradermal injection, as well as a drastic hypotensive effect after intravenous injection. The hypotension is mediated by nitric oxide (NO), which is produced by VEGF-activated endothelium NO synthase. Also induces angiogenesis in vitro, probably through VEGF receptor (KDR/VEGFR-2) signaling. The protein is Snake venom vascular endothelial growth factor toxin HF of Vipera aspis aspis (Aspic viper).